The chain runs to 148 residues: MF7 protein (148 aa).

The polypeptide is MF7 protein (Myxoma virus (strain Lausanne) (MYXV)).